The chain runs to 534 residues: Calcium uptake protein 1 homolog, mitochondrial (534 aa).

A mitochondrion-targeting transit peptide spans 1–32; the sequence is MLHCSFLRVIPIKNASKRLIIVRSLTSAPAKT. The disordered stretch occupies residues 131–150; the sequence is PEASQKEEVTESNGEVEEVK. 3 EF-hand domains span residues 271 to 306, 338 to 359, and 466 to 501; these read TSHA…IMSQ, KDGK…LQHD, and LSDH…RMRR. Ca(2+) is bound by residues D284, D286, N288, and E295.

The protein belongs to the MICU1 family. MICU1 subfamily. In terms of tissue distribution, expressed at low levels in PLM touch receptor neurons, germ cells, epidermis, and muscles.

It is found in the mitochondrion intermembrane space. It localises to the mitochondrion inner membrane. Functionally, calcium sensor of the mitochondrial calcium uniporter (mcu-1) channel, which senses calcium level via its EF-hand domains. At low calcium levels, micu-1 occludes the pore of the mcu-1 channel, preventing mitochondrial calcium uptake. At higher calcium levels, calcium-binding to micu-1 induces a conformational change that weakens mcu-1-micu-1 interactions and moves micu-1 away from the pore, allowing calcium permeation through the mcu-1 channel. Also required to protect against manganese toxicity by preventing manganese uptake by mcu-1. Modulates the activity of the mitochondrial calcium uniporter protein mcu-1 depending on the level of intracellular calcium in PLM touch receptor neurons following axonal injury. In Caenorhabditis elegans, this protein is Calcium uptake protein 1 homolog, mitochondrial.